A 351-amino-acid chain; its full sequence is MTATIPPLTPTVTPSNPDRPIADLKLQDIIKTLPKECFEKKASKAWASVLITLGAIAVGYLGIIYLPWYCLPITWIWTGTALTGAFVVGHDCGHRSFAKKRWVNDLVGHIAFAPLIYPFHSWRLLHDHHHLHTNKIEVDNAWDPWSVEAFQASPAIVRLFYRAIRGPFWWTGSIFHWSLMHFKLSNFAQRDRNKVKLSIAVVFLFAAIAFPALIITTGVWGFVKFWLMPWLVYHFWMSTFTIVHHTIPEIRFRPAADWSAAEAQLNGTVHCDYPRWVEVLCHDINVHIPHHLSVAIPSYNLRLAHGSLKENWGPFLYERTFNWQLMQQISGQCHLYDPEHGYRTFGSLKKV.

2 consecutive transmembrane segments (helical) span residues 46–66 (WASV…IIYL) and 68–88 (WYCL…AFVV). The Histidine box-1 signature appears at 90–94 (HDCGH). A helical membrane pass occupies residues 102–122 (WVNDLVGHIAFAPLIYPFHSW). The short motif at 126-130 (HDHHH) is the Histidine box-2 element. Transmembrane regions (helical) follow at residues 199-219 (IAVV…TTGV) and 222-242 (FVKF…TFTI). Residues 290 to 294 (HHLSV) carry the Histidine box-3 motif.

This sequence belongs to the fatty acid desaturase type 2 family. The cofactor is Fe(2+).

It localises to the membrane. The enzyme catalyses a 1-[(9Z)-octadecenoyl]-2-acyl-glycerolipid + 2 reduced [2Fe-2S]-[ferredoxin] + O2 + 2 H(+) = a 1-[(9Z,12Z)-octadecdienoyl]-2-acyl-glycerolipid + 2 oxidized [2Fe-2S]-[ferredoxin] + 2 H2O. It functions in the pathway lipid metabolism; polyunsaturated fatty acid biosynthesis. Desaturase involved in fatty acid biosynthesis. Introduces a double bond at carbon 12 of oleoyl groups (18:1) attached to the sn-1 position of the glycerol moiety of membrane glycerolipids. This enzyme is involved in chilling tolerance because the phase transition temperature of lipids of cellular membranes depends on the degree of unsaturation of fatty acids of the membrane lipids. The sequence is that of sn-1 oleoyl-lipid 12-desaturase from Synechocystis sp. (strain ATCC 27184 / PCC 6803 / Kazusa).